The following is a 250-amino-acid chain: MKICLIDETGAGDGALSVLAARWGLEHDEDNLMALVLTPEHLELRKRDEPKLGGIFVDFVGGAMAHRRKFGGGRGEAVAKAVGIKGDYLPDVVDATAGLGRDAFVLASVGCRVRMLERNPVVAALLDDGLARGYADAEIGGWLQERLQLIHASSLTALTDITPRPQVVYLDPMFPHKQKSALVKKEMRVFQSLVGPDLDADGLLEPARLLATKRVVVKRPDYAPPLANVATPNAVVTKGHRFDIYAGTPV.

S-adenosyl-L-methionine is bound by residues 101–102 (RD), 117–118 (ER), 153–154 (SS), and aspartate 171.

The protein belongs to the methyltransferase superfamily. RsmJ family.

The protein resides in the cytoplasm. It catalyses the reaction guanosine(1516) in 16S rRNA + S-adenosyl-L-methionine = N(2)-methylguanosine(1516) in 16S rRNA + S-adenosyl-L-homocysteine + H(+). Its function is as follows. Specifically methylates the guanosine in position 1516 of 16S rRNA. This Shigella flexneri serotype 5b (strain 8401) protein is Ribosomal RNA small subunit methyltransferase J.